The sequence spans 384 residues: 2-isopropylmalate synthase 2 (384 aa).

The Pyruvate carboxyltransferase domain occupies 9 to 260; that stretch reads VYIVDTTLRD…DLGIDTSRFR (252 aa). Mn(2+)-binding residues include aspartate 18, histidine 198, histidine 200, and asparagine 234.

The protein belongs to the alpha-IPM synthase/homocitrate synthase family. LeuA type 1 subfamily. Homodimer. It depends on Mn(2+) as a cofactor.

It localises to the cytoplasm. The catalysed reaction is 3-methyl-2-oxobutanoate + acetyl-CoA + H2O = (2S)-2-isopropylmalate + CoA + H(+). It functions in the pathway amino-acid biosynthesis; L-leucine biosynthesis; L-leucine from 3-methyl-2-oxobutanoate: step 1/4. Functionally, catalyzes the condensation of the acetyl group of acetyl-CoA with 3-methyl-2-oxobutanoate (2-ketoisovalerate) to form 3-carboxy-3-hydroxy-4-methylpentanoate (2-isopropylmalate). The protein is 2-isopropylmalate synthase 2 of Caldanaerobacter subterraneus subsp. tengcongensis (strain DSM 15242 / JCM 11007 / NBRC 100824 / MB4) (Thermoanaerobacter tengcongensis).